We begin with the raw amino-acid sequence, 371 residues long: Opine oxidase subunit B (371 aa).

As to quaternary structure, heterodimer of a subunit A and a subunit B.

The protein operates within opine metabolism; octopine degradation. Functionally, oxidative cleavage of octopine into L-arginine and pyruvate. This is Opine oxidase subunit B (ooxB) from Agrobacterium tumefaciens (strain Ach5).